A 180-amino-acid polypeptide reads, in one-letter code: Ribulose bisphosphate carboxylase small subunit, chloroplastic 2 (180 aa).

A chloroplast-targeting transit peptide spans 1 to 56 (MASSVISSAAVATRSNVTQASMVAPFTGLKSSATFPVTKKQNLDITSIASNGGRVS).

The protein belongs to the RuBisCO small chain family. As to quaternary structure, heterohexadecamer of 8 large and 8 small subunits. (Microbial infection) Binds to tobamovirus movement protein; this interaction seems required for viral systemic movement.

It localises to the plastid. The protein resides in the chloroplast. Its subcellular location is the cell junction. The protein localises to the plasmodesma. RuBisCO catalyzes two reactions: the carboxylation of D-ribulose 1,5-bisphosphate, the primary event in carbon dioxide fixation, as well as the oxidative fragmentation of the pentose substrate. Both reactions occur simultaneously and in competition at the same active site. Although the small subunit is not catalytic it is essential for maximal activity. Involved in antiviral defenses. The chain is Ribulose bisphosphate carboxylase small subunit, chloroplastic 2 from Solanum lycopersicum (Tomato).